The following is a 997-amino-acid chain: Mannuronan C5-epimerase AlgE5 (997 aa).

PbH1 repeat units follow at residues 133–155 (DRDV…DPHE), 157–179 (TINL…VADF), 180–202 (QIGG…NIVT), 204–226 (TNDF…VIQR), 257–279 (AHDV…RVYG), 280–315 (AEDV…GVSG), and 320–359 (TTGT…SVSN). Hemolysin-type calcium-binding repeat units follow at residues 388-403 (GTTG…AHET), 406-422 (GLDG…NDIL), 424-439 (GGAG…GADL), 557-573 (GHAG…DDIL), 574-590 (VGGA…GADL), 695-709 (GSAG…AADE), 712-729 (HGGA…ADVF), 828-839 (GSDGNDTLDGGS), 846-862 (GGAG…NDIL), and 864-880 (GGAG…SDIF).

This sequence belongs to the D-mannuronate C5-epimerase family. Requires Ca(2+) as cofactor.

It localises to the secreted. It catalyses the reaction [(1-&gt;4)-beta-D-mannuronosyl](n) = [alginate](n). It functions in the pathway glycan biosynthesis; alginate biosynthesis. Its activity is regulated as follows. Inhibited by zinc. Converts beta-D-mannuronic acid (M) to alpha-L-guluronic acid (G), producing a polymer with gel-forming capacity, required for the formation of the cyst coat. The sequence is that of Mannuronan C5-epimerase AlgE5 from Azotobacter vinelandii.